The chain runs to 432 residues: Killer cell immunoglobulin-like receptor 3DL1 (432 aa).

An N-terminal signal peptide occupies residues 1–21 (MLLWFLSLVCSGFFLVQRMSA). Residues 22–335 (HVGSHDKPFL…ADTKTNNYKN (314 aa)) are Extracellular-facing. Ig-like C2-type domains follow at residues 42-100 (GQNV…HPQY), 135-202 (GGNV…NSYY), and 238-301 (GETM…FRNA). N44 is a glycosylation site (N-linked (GlcNAc...) asparagine). An intrachain disulfide couples C49 to C95. The N-linked (GlcNAc...) asparagine glycan is linked to N137. Disulfide bonds link C142–C195 and C245–C294. An N-linked (GlcNAc...) asparagine glycan is attached at N300. A helical transmembrane segment spans residues 336 to 356 (LHILTGLLVTMVLVVIIIFYS). Over 357–432 (CYFSKQNKSQ…DTIVYMEIMK (76 aa)) the chain is Cytoplasmic.

This sequence belongs to the immunoglobulin superfamily.

It localises to the cell membrane. Receptor on natural killer (NK) cells. Inhibits the activity of NK cells thus preventing cell lysis. This Mus musculus (Mouse) protein is Killer cell immunoglobulin-like receptor 3DL1 (Kir3dl1).